Here is a 194-residue protein sequence, read N- to C-terminus: Rho-related protein racC (194 aa).

Residues alanine 17, glycine 19, lysine 20, threonine 21, cysteine 22, glutamate 34, tyrosine 36, threonine 39, glycine 64, lysine 120, aspartate 122, alanine 163, and lysine 164 each coordinate GTP. Threonine 21 contacts Mg(2+). 2 consecutive short sequence motifs (switch) follow at residues 30–41 and 61–79; these read RKFPEDYIPTVF and DTAG…YSSA. Threonine 39 is a Mg(2+) binding site. Cysteine 191 carries the cysteine methyl ester modification. A lipid anchor (S-geranylgeranyl cysteine) is attached at cysteine 191. The propeptide at 192 to 194 is removed in mature form; it reads ALL.

The protein belongs to the small GTPase superfamily. Rho family. As to quaternary structure, interacts (GTP-bound form) with PAK4 (via CRIB domain). Interacts (GTP-bound form) with PAK5 (via CRIB domain). The cofactor is Mg(2+).

The protein localises to the cell membrane. Its subcellular location is the cytoplasm. It localises to the cytoskeleton. The enzyme catalyses GTP + H2O = GDP + phosphate + H(+). Its activity is regulated as follows. Regulated by guanine nucleotide exchange factors (GEFs) which promote the exchange of bound GDP for free GTP, GTPase activating proteins (GAPs) which increase the GTP hydrolysis activity, and GDP dissociation inhibitors which inhibit the dissociation of the nucleotide from the GTPase. Small GTPase which cycles between active GTP-bound and inactive GDP-bound states. In Entamoeba histolytica (strain ATCC 30459 / HM-1:IMSS / ABRM), this protein is Rho-related protein racC.